The following is a 395-amino-acid chain: RNA polymerase II elongation factor ELL3 (395 aa).

4 disordered regions span residues 124-149 (SSLQRHNRTEDARDRESWQNVGDYPE), 163-182 (VPDPLASSQGQSLPGSSREH), 194-218 (LPNRDPDQALPPSASQKHVDKKRPA), and 233-279 (LAPS…SLSP). Positions 130–140 (NRTEDARDRES) are enriched in basic and acidic residues. A compositionally biased stretch (polar residues) spans 168 to 177 (ASSQGQSLPG). Over residues 246 to 258 (LQEEDWEQEDKDE) the composition is skewed to acidic residues. Residues 268-277 (PSVQADSESL) are compositionally biased toward polar residues. In terms of domain architecture, OCEL spans 283 to 393 (PDYLLQYRAI…LILEFEEKNR (111 aa)).

Belongs to the ELL/occludin family. Interacts with AFF4. Component of the super elongation complex (SEC), at least composed of EAF1, EAF2, CDK9, MLLT3/AF9, AFF (AFF1 or AFF4), the P-TEFb complex and ELL (ELL, ELL2 or ELL3). Component of the little elongation complex (LEC), at least composed of ELL (ELL, ELL2 or ELL3), ZC3H8, ICE1 and ICE2.

Its subcellular location is the nucleus. Enhancer-binding elongation factor that specifically binds enhancers in embryonic stem cells (ES cells), marks them, and is required for their future activation during stem cell specification. Elongation factor component of the super elongation complex (SEC), a complex required to increase the catalytic rate of RNA polymerase II transcription by suppressing transient pausing by the polymerase at multiple sites along the DNA. Component of the little elongation complex (LEC), a complex required to regulate small nuclear RNA (snRNA) gene transcription by RNA polymerase II and III. Does not only bind to enhancer regions of active genes, but also marks the enhancers that are in a poised or inactive state in ES cells and is required for establishing proper RNA polymerase II occupancy at developmentally regulated genes in a cohesin-dependent manner. Probably required for priming developmentally regulated genes for later recruitment of the super elongation complex (SEC), for transcriptional activation during differentiation. Required for recruitment of P-TEFb within SEC during differentiation. Probably preloaded on germ cell chromatin, suggesting that it may prime gene activation by marking enhancers as early as in the germ cells. Promoting epithelial-mesenchymal transition (EMT). This Bos taurus (Bovine) protein is RNA polymerase II elongation factor ELL3 (ELL3).